The primary structure comprises 424 residues: Tyrosine--tRNA ligase (424 aa).

Tyr37 lines the L-tyrosine pocket. Positions 42-51 match the 'HIGH' region motif; the sequence is PTADSLHLGH. L-tyrosine-binding residues include Tyr175 and Gln179. The short motif at 235–239 is the 'KMSKS' region element; sequence KFGKT. Lys238 provides a ligand contact to ATP. The S4 RNA-binding domain maps to 357-414; that stretch reads ADLQQALVNAELVPSRGQARTMIGSNAVTINGEKQSNAEYNFSDADRLFGRYTLLRRG.

This sequence belongs to the class-I aminoacyl-tRNA synthetase family. TyrS type 1 subfamily. As to quaternary structure, homodimer.

It localises to the cytoplasm. The catalysed reaction is tRNA(Tyr) + L-tyrosine + ATP = L-tyrosyl-tRNA(Tyr) + AMP + diphosphate + H(+). In terms of biological role, catalyzes the attachment of tyrosine to tRNA(Tyr) in a two-step reaction: tyrosine is first activated by ATP to form Tyr-AMP and then transferred to the acceptor end of tRNA(Tyr). The protein is Tyrosine--tRNA ligase of Serratia proteamaculans (strain 568).